The following is a 370-amino-acid chain: Actin-related protein 2/3 complex subunit 1A (370 aa).

6 WD repeats span residues 6-45 (FLLE…WTKA), 50-89 (EHNG…WKPT), 140-179 (PIRS…VDEK), 202-241 (GTGG…QVST), 244-284 (TEFL…TFVS), and 322-365 (LHQN…SSIQ).

The protein belongs to the WD repeat ARPC1 family. As to quaternary structure, probable component of the Arp2/3 complex in which it may replace ARPC1B.

Its subcellular location is the cytoplasm. The protein localises to the cytoskeleton. It localises to the nucleus. Probably functions as a component of the Arp2/3 complex which is involved in regulation of actin polymerization and together with an activating nucleation-promoting factor (NPF) mediates the formation of branched actin networks. In addition to its role in the cytoplasmic cytoskeleton, the Arp2/3 complex also promotes actin polymerization in the nucleus, thereby regulating gene transcription and repair of damaged DNA. The sequence is that of Actin-related protein 2/3 complex subunit 1A (Arpc1a) from Rattus norvegicus (Rat).